The sequence spans 226 residues: Ribosomal RNA small subunit methyltransferase Nep1 (226 aa).

S-adenosyl-L-methionine is bound by residues Gly-176, Gly-181, and Ile-197–Leu-202.

Belongs to the class IV-like SAM-binding methyltransferase superfamily. RNA methyltransferase NEP1 family. As to quaternary structure, homodimer.

It carries out the reaction a pseudouridine in rRNA + S-adenosyl-L-methionine = an N(1)-methylpseudouridine in rRNA + S-adenosyl-L-homocysteine + H(+). Its function is as follows. Methyltransferase involved in ribosomal biogenesis. Specifically catalyzes the N1-methylation of the pseudouridine corresponding to position 914 in M.jannaschii 16S rRNA. The protein is Ribosomal RNA small subunit methyltransferase Nep1 of Methanothrix thermoacetophila (strain DSM 6194 / JCM 14653 / NBRC 101360 / PT) (Methanosaeta thermophila).